Consider the following 1311-residue polypeptide: AF4/FMR2 family member 2 (1311 aa).

Disordered stretches follow at residues 94–187, 204–229, and 377–417; these read LVGI…LTQD, PQIG…GEDA, and TAGH…TKSV. Over residues 101–111 the composition is skewed to polar residues; that stretch reads SVPQNPNNKNE. A compositionally biased stretch (basic and acidic residues) spans 155-164; it reads SKPEWSRDSH. The span at 165 to 187 shows a compositional bias: polar residues; the sequence is NPSTVLASQASGQPNKMQTLTQD. Composition is skewed to polar residues over residues 377–396 and 403–417; these read TAGH…SQHL and QKWN…TKSV. Position 430 is a phosphoserine (Ser-430). Disordered regions lie at residues 457 to 530, 574 to 726, 818 to 867, and 881 to 943; these read KAKP…KWQL, TNAS…DQEE, SLHA…IPEK, and PPCI…DKNI. Residues 465–477 are compositionally biased toward pro residues; it reads VNPPLATPQPPPA. The segment covering 478–491 has biased composition (low complexity); sequence VQASGGSGSSSESE. Thr-517 is modified (phosphothreonine). Residues 582–597 are compositionally biased toward basic and acidic residues; that stretch reads EPKERPLLSLIREKAR. The segment covering 615–625 has biased composition (polar residues); sequence STTSETVSQRT. Positions 655–668 are enriched in basic and acidic residues; that stretch reads PKEKESVELHDPPR. Positions 669–679 are enriched in basic residues; the sequence is GRNKATAHKPA. Positions 857 to 867 are enriched in basic and acidic residues; that stretch reads PIEVAEKIPEK. 2 stretches are compositionally biased toward pro residues: residues 883–892 and 913–922; these read CISPAPPHKP and FPPPLSPLPE.

This sequence belongs to the AF4 family. Brain (most abundant in hippocampus and amygdala), placenta and lung.

The protein localises to the nucleus speckle. RNA-binding protein. Might be involved in alternative splicing regulation through an interaction with G-quartet RNA structure. The protein is AF4/FMR2 family member 2 of Homo sapiens (Human).